Reading from the N-terminus, the 468-residue chain is 6-phospho-beta-galactosidase (468 aa).

D-galactose 6-phosphate contacts are provided by Gln19, His116, Asn159, Glu160, and Asn297. Glu160 functions as the Proton donor in the catalytic mechanism. The active-site Nucleophile is the Glu375. D-galactose 6-phosphate contacts are provided by Ser428, Trp429, Lys435, and Tyr437.

It belongs to the glycosyl hydrolase 1 family.

It catalyses the reaction a 6-phospho-beta-D-galactoside + H2O = D-galactose 6-phosphate + an alcohol. The protein operates within carbohydrate metabolism; lactose degradation; D-galactose 6-phosphate and beta-D-glucose from lactose 6-phosphate: step 1/1. The polypeptide is 6-phospho-beta-galactosidase (Streptococcus pyogenes serotype M1).